The chain runs to 678 residues: Methionine--tRNA ligase (678 aa).

Positions 14–24 (PYANGSIHLGH) match the 'HIGH' region motif. Zn(2+) contacts are provided by cysteine 145, cysteine 148, cysteine 158, and cysteine 161. The 'KMSKS' region signature appears at 331 to 335 (KMSKS). Lysine 334 is a binding site for ATP. The tRNA-binding domain maps to 576–678 (AFAAVDLRIA…SGAKPGQRVK (103 aa)).

Belongs to the class-I aminoacyl-tRNA synthetase family. MetG type 1 subfamily. Homodimer. Zn(2+) is required as a cofactor.

The protein localises to the cytoplasm. It carries out the reaction tRNA(Met) + L-methionine + ATP = L-methionyl-tRNA(Met) + AMP + diphosphate. Its function is as follows. Is required not only for elongation of protein synthesis but also for the initiation of all mRNA translation through initiator tRNA(fMet) aminoacylation. The protein is Methionine--tRNA ligase of Ectopseudomonas mendocina (strain ymp) (Pseudomonas mendocina).